Here is a 413-residue protein sequence, read N- to C-terminus: Synaptosomal-associated protein 47 (413 aa).

Residues 109-171 (AANIPSHVTR…DVADRLLTEL (63 aa)) enclose the t-SNARE coiled-coil homology 1 domain. The segment at 321–342 (RHAASRPKGCTPHRELPTGGQE) is disordered. Positions 350–412 (KNLPLFSEGE…DKQNRRMRKL (63 aa)) constitute a t-SNARE coiled-coil homology 2 domain.

It belongs to the SVAP1 family. Associates with the BLOC-1 complex. Interacts with BLOC1S6. Forms a complex containing SNAP47, VAMP2 and STX1A. Ubiquitously expressed with the most abundant expression in the brain. In brain, most highly expressed in the glomerular layer of the olfactory bulb, the cortex, striatum, hippocampus, and colliculi (at protein level).

The protein localises to the endomembrane system. It is found in the cytoplasm. Its subcellular location is the perinuclear region. Its function is as follows. May play a role in intracellular membrane fusion. This chain is Synaptosomal-associated protein 47 (Snap47), found in Mus musculus (Mouse).